A 144-amino-acid polypeptide reads, in one-letter code: Maximins 3/H16 (144 aa).

Residues 1–18 (MNFKYIVAVSFLIASAYA) form the signal peptide. Propeptides lie at residues 19–43 (RSVQNDEQSLSQRDVLEEESLREIR) and 73–122 (RTAE…KKEK). I143 bears the Isoleucine amide mark.

It belongs to the bombinin family. In terms of tissue distribution, expressed by the skin glands.

It localises to the secreted. Its function is as follows. Maximin-3 shows antibacterial activity against both Gram-positive and Gram-negative bacteria. It also shows antimicrobial activity against the fungus C.albicans, but not against A.flavus nor P.uticale. It has little hemolytic activity. It possess a significant cytotoxicity against tumor cell lines. It possess a significant anti-HIV activity. It shows high spermicidal activity. Functionally, maximin-H16 shows antimicrobial activity against bacteria and against the fungus C.albicans. Shows strong hemolytic activity. The protein is Maximins 3/H16 of Bombina maxima (Giant fire-bellied toad).